A 92-amino-acid chain; its full sequence is Small ribosomal subunit protein uS19 (92 aa).

This sequence belongs to the universal ribosomal protein uS19 family.

In terms of biological role, protein S19 forms a complex with S13 that binds strongly to the 16S ribosomal RNA. The chain is Small ribosomal subunit protein uS19 from Clostridium botulinum (strain Eklund 17B / Type B).